A 185-amino-acid polypeptide reads, in one-letter code: Peptidyl-tRNA hydrolase (185 aa).

Residue tyrosine 14 coordinates tRNA. The Proton acceptor role is filled by histidine 19. TRNA is bound by residues tyrosine 65, asparagine 67, and asparagine 113.

This sequence belongs to the PTH family. In terms of assembly, monomer.

The protein resides in the cytoplasm. The enzyme catalyses an N-acyl-L-alpha-aminoacyl-tRNA + H2O = an N-acyl-L-amino acid + a tRNA + H(+). Its function is as follows. Hydrolyzes ribosome-free peptidyl-tRNAs (with 1 or more amino acids incorporated), which drop off the ribosome during protein synthesis, or as a result of ribosome stalling. Functionally, catalyzes the release of premature peptidyl moieties from peptidyl-tRNA molecules trapped in stalled 50S ribosomal subunits, and thus maintains levels of free tRNAs and 50S ribosomes. This is Peptidyl-tRNA hydrolase from Rickettsia africae (strain ESF-5).